Consider the following 341-residue polypeptide: MNPQAILARILEQHEIPYEEMIELMRAIMSGNVSPVMTAALVTGLRIKRESIGEISAAAQVMRELAVRIEVPDASHLVDTCGTGGDGCNTFNISTTSAFVAAAAGAQVAKHGGRSVSGKVGSADVLEAIGINLDQTPDQIARSITEVGIGFMFAPNFHHAMKHAAPVRRELGVRTVFNILGPLTNPAGASNQLLGVYHADLTGVLAQVLLRLGSRHAMIVHGSDGLDEITLSGPTKIAELNAGEVREYSVQPEDFGLERAALTSLQVNSTEDAQAMLLSVLDNHPGPARDIVLLNAGAAIYVAGKADSWARGVETARDMLASGAAKQKMQALVEFSNQVSA.

Residues Gly-82, 85 to 86 (GD), Thr-90, 92 to 95 (NIST), 110 to 118 (KHGGRSVSG), and Ser-122 each bind 5-phospho-alpha-D-ribose 1-diphosphate. Gly-82 is a binding site for anthranilate. Residue Ser-94 participates in Mg(2+) binding. Residue Arg-168 coordinates anthranilate. The Mg(2+) site is built by Asp-227 and Glu-228.

This sequence belongs to the anthranilate phosphoribosyltransferase family. Homodimer. The cofactor is Mg(2+).

The enzyme catalyses N-(5-phospho-beta-D-ribosyl)anthranilate + diphosphate = 5-phospho-alpha-D-ribose 1-diphosphate + anthranilate. The protein operates within amino-acid biosynthesis; L-tryptophan biosynthesis; L-tryptophan from chorismate: step 2/5. In terms of biological role, catalyzes the transfer of the phosphoribosyl group of 5-phosphorylribose-1-pyrophosphate (PRPP) to anthranilate to yield N-(5'-phosphoribosyl)-anthranilate (PRA). This Nitrosomonas europaea (strain ATCC 19718 / CIP 103999 / KCTC 2705 / NBRC 14298) protein is Anthranilate phosphoribosyltransferase.